The chain runs to 338 residues: Glyceraldehyde-3-phosphate dehydrogenase, cytosolic (338 aa).

The tract at residues 2-153 (ADKKIKIGIN…YKSDLNIVSN (152 aa)) is binding to NAD. NAD(+) is bound by residues 15 to 16 (RI) and aspartate 37. The interval 56 to 75 (GQWKHNELKVKDEKTLLFGE) is external loop. Residue arginine 84 coordinates NAD(+). Residues 154 to 338 (ASCTTNCLAP…VDLIIHMSKA (185 aa)) form a catalytic region. A D-glyceraldehyde 3-phosphate-binding site is contributed by 155–157 (SCT). The active-site Nucleophile is cysteine 156. 2 positions are modified to S-nitrosocysteine: cysteine 156 and cysteine 160. The tract at residues 183–206 (HSITATQKTVDGPSMKDWRGGRAA) is S-loop. D-glyceraldehyde 3-phosphate-binding positions include threonine 186, 215–216 (TG), and arginine 238. Residue asparagine 320 coordinates NAD(+).

This sequence belongs to the glyceraldehyde-3-phosphate dehydrogenase family. Homotetramer.

Its subcellular location is the cytoplasm. It catalyses the reaction D-glyceraldehyde 3-phosphate + phosphate + NAD(+) = (2R)-3-phospho-glyceroyl phosphate + NADH + H(+). The protein operates within carbohydrate degradation; glycolysis; pyruvate from D-glyceraldehyde 3-phosphate: step 1/5. Key enzyme in glycolysis that catalyzes the first step of the pathway by converting D-glyceraldehyde 3-phosphate (G3P) into 3-phospho-D-glyceroyl phosphate. Essential for the maintenance of cellular ATP levels and carbohydrate metabolism. The polypeptide is Glyceraldehyde-3-phosphate dehydrogenase, cytosolic (GAPC) (Sinapis alba (White mustard)).